A 765-amino-acid polypeptide reads, in one-letter code: Multifunctional tryptophan biosynthesis protein (765 aa).

The region spanning A2–E196 is the Glutamine amidotransferase type-1 domain. Residue G53–G55 coordinates L-glutamine. C81 serves as the catalytic Nucleophile; for GATase activity. L-glutamine is bound by residues Q85 and S131–L132. Catalysis depends on for GATase activity residues H170 and E172. The interval T231–L494 is indole-3-glycerol phosphate synthase. Residues Q512 to Q765 form an N-(5'-phosphoribosyl)anthranilate isomerase region.

The catalysed reaction is N-(5-phospho-beta-D-ribosyl)anthranilate = 1-(2-carboxyphenylamino)-1-deoxy-D-ribulose 5-phosphate. The enzyme catalyses 1-(2-carboxyphenylamino)-1-deoxy-D-ribulose 5-phosphate + H(+) = (1S,2R)-1-C-(indol-3-yl)glycerol 3-phosphate + CO2 + H2O. It carries out the reaction chorismate + L-glutamine = anthranilate + pyruvate + L-glutamate + H(+). Its pathway is amino-acid biosynthesis; L-tryptophan biosynthesis; L-tryptophan from chorismate: step 1/5. It functions in the pathway amino-acid biosynthesis; L-tryptophan biosynthesis; L-tryptophan from chorismate: step 3/5. It participates in amino-acid biosynthesis; L-tryptophan biosynthesis; L-tryptophan from chorismate: step 4/5. Its function is as follows. Trifunctional enzyme bearing the Gln amidotransferase (GATase) domain of anthranilate synthase, indole-glycerolphosphate synthase, and phosphoribosylanthranilate isomerase activities. This is Multifunctional tryptophan biosynthesis protein (trp1) from Phycomyces blakesleeanus.